Here is a 222-residue protein sequence, read N- to C-terminus: Ribosomal RNA small subunit methyltransferase G (222 aa).

Residues glycine 84, phenylalanine 89, 141–142 (VE), and arginine 154 contribute to the S-adenosyl-L-methionine site.

Belongs to the methyltransferase superfamily. RNA methyltransferase RsmG family.

The protein resides in the cytoplasm. The enzyme catalyses guanosine(527) in 16S rRNA + S-adenosyl-L-methionine = N(7)-methylguanosine(527) in 16S rRNA + S-adenosyl-L-homocysteine. Its function is as follows. Specifically methylates the N7 position of guanine in position 527 of 16S rRNA. This is Ribosomal RNA small subunit methyltransferase G from Bradyrhizobium sp. (strain ORS 278).